A 339-amino-acid chain; its full sequence is Putative zinc metalloprotease CA_C1796 (339 aa).

Residue His20 participates in Zn(2+) binding. Glu21 is an active-site residue. A Zn(2+)-binding site is contributed by His24. The next 3 helical transmembrane spans lie at 91 to 113 (LSIV…CIVG), 275 to 297 (QLGV…LFLF), and 310 to 330 (VGFV…VVTI). In terms of domain architecture, PDZ spans 99–177 (IMNLILAAVL…GIKLALKNNG (79 aa)).

The protein belongs to the peptidase M50B family. Zn(2+) is required as a cofactor.

The protein resides in the cell membrane. The sequence is that of Putative zinc metalloprotease CA_C1796 from Clostridium acetobutylicum (strain ATCC 824 / DSM 792 / JCM 1419 / IAM 19013 / LMG 5710 / NBRC 13948 / NRRL B-527 / VKM B-1787 / 2291 / W).